We begin with the raw amino-acid sequence, 328 residues long: D-cysteine desulfhydrase (328 aa).

Lys-51 is subject to N6-(pyridoxal phosphate)lysine.

Belongs to the ACC deaminase/D-cysteine desulfhydrase family. As to quaternary structure, homodimer. Pyridoxal 5'-phosphate is required as a cofactor.

The catalysed reaction is D-cysteine + H2O = hydrogen sulfide + pyruvate + NH4(+) + H(+). In terms of biological role, catalyzes the alpha,beta-elimination reaction of D-cysteine and of several D-cysteine derivatives. It could be a defense mechanism against D-cysteine. The polypeptide is D-cysteine desulfhydrase (Salmonella agona (strain SL483)).